Here is a 215-residue protein sequence, read N- to C-terminus: L-fuculose phosphate aldolase (215 aa).

Residues 28–29 (GN), 43–44 (TG), and 71–72 (SS) contribute to the substrate site. E73 serves as the catalytic Proton donor/acceptor. Residues E73, H92, H94, and H155 each contribute to the Zn(2+) site.

This sequence belongs to the aldolase class II family. AraD/FucA subfamily. In terms of assembly, homotetramer. The cofactor is Zn(2+).

It carries out the reaction L-fuculose 1-phosphate = (S)-lactaldehyde + dihydroxyacetone phosphate. It participates in carbohydrate degradation; L-fucose degradation; L-lactaldehyde and glycerone phosphate from L-fucose: step 3/3. Its function is as follows. Involved in the degradation of L-fucose and D-arabinose. Catalyzes the reversible cleavage of L-fuculose 1-phosphate (Fuc1P) to yield dihydroxyacetone phosphate (DHAP) and L-lactaldehyde. This chain is L-fuculose phosphate aldolase, found in Escherichia coli O157:H7.